A 510-amino-acid chain; its full sequence is Maturase K (510 aa).

The protein belongs to the intron maturase 2 family. MatK subfamily.

The protein resides in the plastid. Functionally, usually encoded in the trnK tRNA gene intron. Probably assists in splicing its own and other chloroplast group II introns. In Bartsia alpina (Velvet bells), this protein is Maturase K.